The chain runs to 400 residues: Nicotinate phosphoribosyltransferase (400 aa).

His-220 bears the Phosphohistidine; by autocatalysis mark.

The protein belongs to the NAPRTase family. In terms of processing, transiently phosphorylated on a His residue during the reaction cycle. Phosphorylation strongly increases the affinity for substrates and increases the rate of nicotinate D-ribonucleotide production. Dephosphorylation regenerates the low-affinity form of the enzyme, leading to product release.

The enzyme catalyses nicotinate + 5-phospho-alpha-D-ribose 1-diphosphate + ATP + H2O = nicotinate beta-D-ribonucleotide + ADP + phosphate + diphosphate. Its pathway is cofactor biosynthesis; NAD(+) biosynthesis; nicotinate D-ribonucleotide from nicotinate: step 1/1. In terms of biological role, catalyzes the synthesis of beta-nicotinate D-ribonucleotide from nicotinate and 5-phospho-D-ribose 1-phosphate at the expense of ATP. This Escherichia coli O127:H6 (strain E2348/69 / EPEC) protein is Nicotinate phosphoribosyltransferase.